The following is a 171-amino-acid chain: Putative defense protein (171 aa).

The N-terminal stretch at 1–23 (MKVYACLCAAVVMLVMTSRVSEA) is a signal peptide. Residues 24 to 171 (RSTGAPLSAC…VQSAPIKIVS (148 aa)) form the Reelin domain. Residues Cys-33 and Cys-110 are joined by a disulfide bond. N-linked (GlcNAc...) asparagine glycosylation is present at Asn-41.

The protein belongs to the insect defense protein family.

The protein resides in the secreted. May have antimicrobial activity. The polypeptide is Putative defense protein (Bombyx mori (Silk moth)).